Consider the following 407-residue polypeptide: Arginine deiminase (407 aa).

C397 serves as the catalytic Amidino-cysteine intermediate.

Belongs to the arginine deiminase family.

It is found in the cytoplasm. The enzyme catalyses L-arginine + H2O = L-citrulline + NH4(+). The protein operates within amino-acid degradation; L-arginine degradation via ADI pathway; carbamoyl phosphate from L-arginine: step 1/2. The sequence is that of Arginine deiminase from Listeria welshimeri serovar 6b (strain ATCC 35897 / DSM 20650 / CCUG 15529 / CIP 8149 / NCTC 11857 / SLCC 5334 / V8).